The following is a 289-amino-acid chain: ATP synthase subunit a (289 aa).

6 consecutive transmembrane segments (helical) span residues 43-63 (AFHL…LLIF), 103-123 (VIAP…AVDL), 160-180 (FCVF…GGFI), 193-213 (IFVQ…TLIA), 232-252 (VFIL…GLGV), and 259-279 (AVFH…LTIV).

Belongs to the ATPase A chain family. As to quaternary structure, F-type ATPases have 2 components, CF(1) - the catalytic core - and CF(0) - the membrane proton channel. CF(1) has five subunits: alpha(3), beta(3), gamma(1), delta(1), epsilon(1). CF(0) has three main subunits: a(1), b(2) and c(9-12). The alpha and beta chains form an alternating ring which encloses part of the gamma chain. CF(1) is attached to CF(0) by a central stalk formed by the gamma and epsilon chains, while a peripheral stalk is formed by the delta and b chains.

Its subcellular location is the cell inner membrane. In terms of biological role, key component of the proton channel; it plays a direct role in the translocation of protons across the membrane. The polypeptide is ATP synthase subunit a (Pseudomonas putida (strain ATCC 700007 / DSM 6899 / JCM 31910 / BCRC 17059 / LMG 24140 / F1)).